The primary structure comprises 501 residues: MHTRRLVKRSVIGSRVYAPGLTGDAAPLTGVIQAVKQDNRDASTGHRRNVYTVLMQDGSVKEYSEEEIAQMTAKAPLKSSLKSTCNGGQRDGLTQGQNGGVQRGEALSLSPESTEEPRVLEHKRTGRALETEKDHTRSVSLLEQKRKVVSSSIDVPQARKSEEEVDMDKVTAAMVLTSLSTSPLVRSPPVKVSEGLNGSWKDGGFTPSSYSSSGYWSWSAPSDQSNPSTPSPPLSADSFKPFRMPSLSGPPDDNIDEHDGNSLLFDEPIPRKRKNSMKVMFKCLWKNCGKVLSTAAGIQRHIRTVHLGRNCDSECSDGEEDFYYTEIKLNTDSVADGLSSLSPVSPSVLSPPPALDQRQPDGTNGTKSESSSSTPLSRSAPSALYLVHTDHAYQATTPVTIPSTSSTGFTPSSSSFSISWQSPPVTFTGTSASPTHSRTQGFGEQHSQTIAVLSSPPRAAGSLSRKSRGEGKKCRKVYGMENRDMWCTACRWKKACQRFVD.

The span at 80–96 (SLKSTCNGGQRDGLTQG) shows a compositional bias: polar residues. 3 disordered regions span residues 80 to 138 (SLKS…HTRS), 183 to 203 (PLVRSPPVKVSEGLNGSWKDG), and 216 to 267 (WSWS…LFDE). Positions 115-137 (EEPRVLEHKRTGRALETEKDHTR) are enriched in basic and acidic residues. The C2H2-type zinc finger occupies 281-306 (FKCLWKNCGKVLSTAAGIQRHIRTVH). Disordered stretches follow at residues 340–380 (SLSP…SRSA), 398–419 (PVTIPSTSSTGFTPSSSSFSIS), 427–446 (FTGTSASPTHSRTQGFGEQH), and 453–472 (LSSPPRAAGSLSRKSRGEGK). The segment covering 368–380 (SESSSSTPLSRSA) has biased composition (low complexity). Positions 472–476 (KKCRK) match the CR1 motif. The short motif at 490–494 (CRWKK) is the CR2 element.

It is found in the nucleus. In terms of biological role, transcription factor. The chain is Zinc finger protein 704 (znf704) from Danio rerio (Zebrafish).